A 192-amino-acid polypeptide reads, in one-letter code: Probable cobalt-precorrin-6B C(15)-methyltransferase (decarboxylating) (192 aa).

Residues threonine 17, 41–45, aspartate 62, and alanine 91 each bind S-adenosyl-L-methionine; that span reads GCGTG.

It belongs to the methyltransferase superfamily. Archaeal-type CbiT family. Homotetramer.

It catalyses the reaction Co-precorrin-6B + S-adenosyl-L-methionine = Co-precorrin-7 + S-adenosyl-L-homocysteine + CO2. Its pathway is cofactor biosynthesis; adenosylcobalamin biosynthesis; cob(II)yrinate a,c-diamide from sirohydrochlorin (anaerobic route): step 8/10. In terms of biological role, catalyzes the methylation of C-15 in cobalt-precorrin-6B followed by the decarboxylation of C-12 to form cobalt-precorrin-7. In Methanothermobacter thermautotrophicus (strain ATCC 29096 / DSM 1053 / JCM 10044 / NBRC 100330 / Delta H) (Methanobacterium thermoautotrophicum), this protein is Probable cobalt-precorrin-6B C(15)-methyltransferase (decarboxylating).